We begin with the raw amino-acid sequence, 362 residues long: Heat-inducible transcription repressor HrcA (362 aa).

It belongs to the HrcA family.

Its function is as follows. Negative regulator of class I heat shock genes (grpE-dnaK-dnaJ and groELS operons). Prevents heat-shock induction of these operons. This Rhizobium rhizogenes (strain K84 / ATCC BAA-868) (Agrobacterium radiobacter) protein is Heat-inducible transcription repressor HrcA.